The sequence spans 1076 residues: Guanylyl cyclase C (1076 aa).

The N-terminal stretch at 1–23 (MKSPLLGLVVWSLLLQLLQPGLA) is a signal peptide. Topologically, residues 24-433 (FWNSQISQNC…PHDIPGLGPH (410 aa)) are extracellular. N-linked (GlcNAc...) asparagine glycans are attached at residues asparagine 35, asparagine 82, asparagine 191, asparagine 198, asparagine 287, asparagine 306, asparagine 310, asparagine 348, and asparagine 405. Residues 434–457 (ILLIAVCTLAGVVVLILLIALLVL) traverse the membrane as a helical segment. The Cytoplasmic portion of the chain corresponds to 458-1076 (RKYKKDNELR…NTTDQDSTYF (619 aa)). The Protein kinase domain occupies 492–752 (LKIDDDKKRD…KIENTLAKIF (261 aa)). In terms of domain architecture, Guanylate cyclase spans 827–957 (TVYFSDIVGF…DTVNTASRME (131 aa)).

The protein belongs to the adenylyl cyclase class-4/guanylyl cyclase family. Homotrimer. Interacts via its C-terminal region with NHERF4. Interacts with the lectin chaperone VIP36. In terms of processing, glycosylation at Asn-62 is required for interaction with VIP36 while glycosylation at Asn-348 and Asn-405 modulates ligand-mediated GC-C activation.

It is found in the cell membrane. The protein resides in the endoplasmic reticulum membrane. It catalyses the reaction GTP = 3',5'-cyclic GMP + diphosphate. Guanylyl cyclase that catalyzes synthesis of cyclic GMP (cGMP) from GTP. This is Guanylyl cyclase C (GUCY2C) from Cavia porcellus (Guinea pig).